Reading from the N-terminus, the 1820-residue chain is Afadin (1820 aa).

The region spanning 39–133 (FHGVMRFYFQ…GRFVLKNEND (95 aa)) is the Ras-associating 1 domain. Residues 129 to 196 (KNENDAIPAK…PSQGDDSENS (68 aa)) form a disordered region. The stretch at 146 to 186 (EKQEKEGVIQNFKRTLSKKEKKEKKKKEKEALRQASDKEER) forms a coiled coil. Over residues 160 to 172 (TLSKKEKKEKKKK) the composition is skewed to basic residues. Over residues 173 to 189 (EKEALRQASDKEERPSQ) the composition is skewed to basic and acidic residues. 3 positions are modified to phosphoserine: Ser216, Ser246, and Ser256. Residues 246-348 (SGGTLRIYAD…LVFQLKRRPP (103 aa)) enclose the Ras-associating 2 domain. The segment covering 356-371 (KKHVEGKSLKGKDRAD) has biased composition (basic and acidic residues). The disordered stretch occupies residues 356–377 (KKHVEGKSLKGKDRADGSGYGS). Phosphoserine is present on residues Ser391 and Ser424. An FHA domain is found at 426–492 (TEVGTEKFDD…LQSGMRLQFG (67 aa)). Ser512, Ser557, Ser562, Ser655, Ser1083, Ser1107, Ser1126, Ser1140, Ser1143, Ser1172, Ser1173, Ser1182, and Ser1199 each carry phosphoserine. Positions 538–569 (GDVHSGTALPASRSTTRLDSDRVSSASSTAER) are disordered. The 256-residue stretch at 653-908 (DISPTERTHK…IENVVAVAEN (256 aa)) folds into the Dilute domain. The 87-residue stretch at 1007–1093 (IITVTLKKQN…VVTLEVAKQG (87 aa)) folds into the PDZ domain. Residues 1107 to 1194 (SPMMQRISDR…GKGPYTSGTA (88 aa)) are disordered. Residues 1113–1128 (ISDRRGSGKPRPKSEG) are compositionally biased toward basic and acidic residues. The segment covering 1132–1143 (YNNSAQNGSPES) has biased composition (polar residues). A compositionally biased stretch (basic and acidic residues) spans 1152–1172 (SEPKKLPGDDRLMKNRADHRS). The interval 1203–1222 (GNLCTEEQSPPPRPEAYPIP) is disordered. Residue Thr1232 is modified to Phosphothreonine. 3 disordered regions span residues 1235 to 1278 (ASKS…SQEE), 1308 to 1527 (QSSS…KQQQ), and 1567 to 1716 (RLQE…LKTQ). At Ser1238 the chain carries Phosphoserine. The segment covering 1252–1262 (YEEKPHVHTES) has biased composition (basic and acidic residues). A Phosphoserine modification is found at Ser1275. Over residues 1309–1318 (SSSVESSTSS) the composition is skewed to low complexity. Positions 1325–1337 (SSKSVTPASTLTK) are enriched in polar residues. Residue Ser1328 is modified to Phosphoserine. The residue at position 1330 (Thr1330) is a Phosphothreonine. The span at 1364–1373 (LPPPPPPPPV) shows a compositional bias: pro residues. The span at 1407–1440 (EWKKREEHQRWYEKEKARLEEERERKRREQERKL) shows a compositional bias: basic and acidic residues. A coiled-coil region spans residues 1410-1446 (KREEHQRWYEKEKARLEEERERKRREQERKLGQMRSQ). Polar residues predominate over residues 1443–1457 (MRSQTLNPASFSPLA). A compositionally biased stretch (basic and acidic residues) spans 1487-1503 (TIERKDLQYITISKEEL). Phosphoserine occurs at positions 1499 and 1510. The span at 1513–1526 (PWKRDAREKLEKQQ) shows a compositional bias: basic and acidic residues. Residues 1523 to 1561 (EKQQQMHIVDMLSKEIHELQNKVDRTAEESDRLRKLMLE) are a coiled coil. Acidic residues predominate over residues 1576 to 1587 (EDDDEEEDDDVD). Residues 1593 to 1665 (QRLEAERRAR…SRLEAERRRQ (73 aa)) adopt a coiled-coil conformation. Residues 1595–1675 (LEAERRARMQ…HEEAARRLLE (81 aa)) are compositionally biased toward basic and acidic residues. Phosphoserine is present on residues Ser1694, Ser1719, Ser1770, and Ser1795. The interval 1734-1820 (EEEDYGPAGP…TELENELNTK (87 aa)) is disordered. Basic and acidic residues predominate over residues 1759 to 1772 (APREAREKLTRSQD). Positions 1800-1820 (VSDKVKASRKLTELENELNTK) are enriched in basic and acidic residues. Lys1803 is subject to N6-acetyllysine.

In terms of assembly, homodimer. Interacts with F-actin, nectin and NECTIN3. Essential for the association of nectin and E-cadherin. Isoform 2/s-afadin does not interact with F-actin. Interacts with ZO-1 and occludin, but probably in an indirect manner. Interacts with RIT1, RIT2, NRXN1 and BCR. Interacts with ADAM10; the interaction locks ADAM10 at adherens junctions following ADAM10 recruitment to adherens junctions by TSPAN33. In terms of tissue distribution, isoform 1 is expressed only in a restricted set of epithelial structures during early embryogenesis.

The protein localises to the cell junction. It is found in the adherens junction. Its function is as follows. Belongs to an adhesion system, probably together with the E-cadherin-catenin system, which plays a role in the organization of homotypic, interneuronal and heterotypic cell-cell adherens junctions (AJs). Nectin- and actin-filament-binding protein that connects nectin to the actin cytoskeleton. May play a key role in the organization of epithelial structures of the embryonic ectoderm. Essential for the organization of adherens junctions. In Mus musculus (Mouse), this protein is Afadin.